The primary structure comprises 184 residues: Elongation factor P (184 aa).

The protein belongs to the elongation factor P family.

It is found in the cytoplasm. Its pathway is protein biosynthesis; polypeptide chain elongation. Involved in peptide bond synthesis. Stimulates efficient translation and peptide-bond synthesis on native or reconstituted 70S ribosomes in vitro. Probably functions indirectly by altering the affinity of the ribosome for aminoacyl-tRNA, thus increasing their reactivity as acceptors for peptidyl transferase. This Variovorax paradoxus (strain S110) protein is Elongation factor P.